A 110-amino-acid chain; its full sequence is Large ribosomal subunit protein uL22 (110 aa).

The protein belongs to the universal ribosomal protein uL22 family. Part of the 50S ribosomal subunit.

This protein binds specifically to 23S rRNA; its binding is stimulated by other ribosomal proteins, e.g. L4, L17, and L20. It is important during the early stages of 50S assembly. It makes multiple contacts with different domains of the 23S rRNA in the assembled 50S subunit and ribosome. In terms of biological role, the globular domain of the protein is located near the polypeptide exit tunnel on the outside of the subunit, while an extended beta-hairpin is found that lines the wall of the exit tunnel in the center of the 70S ribosome. The chain is Large ribosomal subunit protein uL22 from Shigella flexneri serotype 5b (strain 8401).